The sequence spans 490 residues: Cytochrome P450 2C28 (490 aa).

Ser-127 is subject to Phosphoserine. An N6-acetyllysine mark is found at Lys-249 and Lys-375. Cys-435 provides a ligand contact to heme.

The protein belongs to the cytochrome P450 family. Requires heme as cofactor. In terms of tissue distribution, liver.

The protein resides in the endoplasmic reticulum membrane. Its subcellular location is the microsome membrane. It carries out the reaction an organic molecule + reduced [NADPH--hemoprotein reductase] + O2 = an alcohol + oxidized [NADPH--hemoprotein reductase] + H2O + H(+). Its function is as follows. Catalyzes the N-demethylation of aminopyrine and benzphetamine, but does not catalyze the hydroxylation of tolbutamide, testosterone, and progesterone. In Mesocricetus auratus (Golden hamster), this protein is Cytochrome P450 2C28 (CYP2C28).